Reading from the N-terminus, the 647-residue chain is uncharacterized protein (647 aa).

The next 5 helical transmembrane spans lie at 14 to 38 (LFPI…LAVW), 61 to 78 (VVAL…TTLF), 90 to 110 (LWLT…PAFI), 140 to 158 (LSAV…VIYW), and 178 to 195 (VIAL…RSSF).

The protein localises to the cell membrane. This is an uncharacterized protein from Haemophilus influenzae (strain ATCC 51907 / DSM 11121 / KW20 / Rd).